The chain runs to 586 residues: Axin-like protein pry-1 (586 aa).

Positions M1 to S135 are required for interaction with apr-1. Residues S10–N131 enclose the RGS domain. 3 disordered regions span residues T137–A168, M344–A442, and T478–I501. Composition is skewed to polar residues over residues H151 to A168 and G368 to N388. Low complexity predominate over residues S421–A442. Residues R486–I501 are compositionally biased toward basic residues. A DIX domain is found at L505 to R586.

As to quaternary structure, interacts (via N-terminus) with apr-1 (via C-terminus). Interacts with bar-1 (via ARM repeats), gsk-3, and mig-5. As to expression, expressed in hypodermal cells (seam cells) V5 and V6, Q neuroblasts, ventral hypodermal cells P7/8 to P11/12, body wall muscle cells and neurons in the head, the tail and the ventral nerve cord.

It is found in the cell membrane. It localises to the nucleus. The protein resides in the cytoplasm. Its subcellular location is the cell cortex. Works in parallel with axl-1 in negatively regulating bar-1 signaling in vulval precursor cells and Q neuroblasts. Inhibits Wnt signaling, which affects tissue specific expression of Hox genes, egl-5, lin-39 and mab-5. This in turn affects QR (postembryonic neuroblast) cell migration, vulval cell fate specification, and the development of sensory structures by the seam cell lineage. Has a role in alae V cell patterning, ray formation in the male tail and axon guidance. Does not affect B cell polarity. The protein is Axin-like protein pry-1 of Caenorhabditis elegans.